We begin with the raw amino-acid sequence, 168 residues long: uncharacterized protein (168 aa).

One can recognise an N-acetyltransferase domain in the interval 14-168 (IDIPLLDAAS…EYKHWIYVTK (155 aa)).

It belongs to the acetyltransferase family.

This is an uncharacterized protein from Bacillus subtilis (strain 168).